Consider the following 241-residue polypeptide: Orotidine 5'-phosphate decarboxylase (241 aa).

Substrate-binding positions include aspartate 19, lysine 41, 69-78 (DLKFFDIPAT), threonine 124, arginine 185, glutamine 194, glycine 214, and arginine 215. The active-site Proton donor is the lysine 71.

The protein belongs to the OMP decarboxylase family. Type 1 subfamily. As to quaternary structure, homodimer.

It carries out the reaction orotidine 5'-phosphate + H(+) = UMP + CO2. It functions in the pathway pyrimidine metabolism; UMP biosynthesis via de novo pathway; UMP from orotate: step 2/2. Catalyzes the decarboxylation of orotidine 5'-monophosphate (OMP) to uridine 5'-monophosphate (UMP). This is Orotidine 5'-phosphate decarboxylase from Stenotrophomonas maltophilia (strain K279a).